The primary structure comprises 319 residues: Mercury resistance probable Hg transport protein (319 aa).

Cys-298, Cys-299, Cys-318, and Cys-319 together coordinate Hg(2+).

This chain is Mercury resistance probable Hg transport protein, found in Streptomyces lividans.